The sequence spans 667 residues: Sterile alpha motif domain-containing protein 15 (667 aa).

Residues 1-18 are compositionally biased toward acidic residues; that stretch reads MAEVPEDYDSGPDEDGEP. 2 disordered regions span residues 1 to 108 and 147 to 424; these read MAEV…KSER and SAME…IKSK. Basic and acidic residues-rich tracts occupy residues 19–53, 84–93, 187–196, and 228–266; these read ESER…HEPQ, IAKESKRDVP, ESLRVQHEET, and TKPD…KSSE. Acidic residues predominate over residues 268 to 277; that stretch reads AGLEPPEETQ. Basic and acidic residues-rich tracts occupy residues 284–314, 322–338, 346–364, and 381–422; these read MQRK…KSTD, EEIK…KPNE, EMMK…EEKN, and PRVE…EPIK. In terms of domain architecture, SAM spans 538-601; the sequence is WDPEKVAEWI…SRHTRELLEI (64 aa).

The sequence is that of Sterile alpha motif domain-containing protein 15 (SAMD15) from Macaca fascicularis (Crab-eating macaque).